The chain runs to 132 residues: Putative RNase AF_0947 (132 aa).

Catalysis depends on residues R91 and H96. The RX(4)HXY motif signature appears at 91-98 (RNAIAHHY). Y98 carries the post-translational modification O-di-AMP-tyrosine.

It belongs to the HepT RNase toxin family. Homodimer, probably forms a complex with cognate antitoxin AF_0948. In terms of processing, modified by cognate antitoxin AF_0948; probably at least 2 successive AMPylation events occur on Tyr-98.

In terms of biological role, probable toxic component of a putative type VII toxin-antitoxin (TA) system, probably an RNase. Probably neutralized by cognate antitoxin AF_0948. Neutralization may be due to AMPylation by AF_0948. The protein is Putative RNase AF_0947 of Archaeoglobus fulgidus (strain ATCC 49558 / DSM 4304 / JCM 9628 / NBRC 100126 / VC-16).